A 165-amino-acid chain; its full sequence is 3-isopropylmalate dehydratase small subunit (165 aa).

Belongs to the LeuD family. LeuD type 2 subfamily. As to quaternary structure, heterodimer of LeuC and LeuD.

The catalysed reaction is (2R,3S)-3-isopropylmalate = (2S)-2-isopropylmalate. Its pathway is amino-acid biosynthesis; L-leucine biosynthesis; L-leucine from 3-methyl-2-oxobutanoate: step 2/4. Catalyzes the isomerization between 2-isopropylmalate and 3-isopropylmalate, via the formation of 2-isopropylmaleate. This chain is 3-isopropylmalate dehydratase small subunit, found in Halothermothrix orenii (strain H 168 / OCM 544 / DSM 9562).